We begin with the raw amino-acid sequence, 1159 residues long: WASH complex subunit 5 (1159 aa).

A Phosphoserine modification is found at Ser917.

Belongs to the strumpellin family. As to quaternary structure, component of the WASH core complex also described as WASH regulatory complex (SHRC) composed of WASH (WASHC1, WASH2P or WASH3P), WASHC2 (WASHC2A or WASHC2C), WASHC3, WASHC4 and WASHC5. The WASH core complex associates via WASHC2 with the F-actin-capping protein dimer (formed by CAPZA1, CAPZA2 or CAPZA3 and CAPZB) in a transient or substoichiometric manner which was initially described as WASH complex. Interacts with VCP, PI4K2A.

It localises to the cytoplasm. The protein resides in the cytosol. It is found in the endoplasmic reticulum. The protein localises to the early endosome. In terms of biological role, acts as a component of the WASH core complex that functions as a nucleation-promoting factor (NPF) at the surface of endosomes, where it recruits and activates the Arp2/3 complex to induce actin polymerization, playing a key role in the fission of tubules that serve as transport intermediates during endosome sorting. May be involved in axonal outgrowth. Involved in cellular localization of ADRB2. Involved in cellular trafficking of BLOC-1 complex cargos such as ATP7A and VAMP7. The sequence is that of WASH complex subunit 5 from Pongo abelii (Sumatran orangutan).